Reading from the N-terminus, the 286-residue chain is ATP synthase gamma chain (286 aa).

It belongs to the ATPase gamma chain family. In terms of assembly, F-type ATPases have 2 components, CF(1) - the catalytic core - and CF(0) - the membrane proton channel. CF(1) has five subunits: alpha(3), beta(3), gamma(1), delta(1), epsilon(1). CF(0) has three main subunits: a, b and c.

The protein localises to the cell inner membrane. Its function is as follows. Produces ATP from ADP in the presence of a proton gradient across the membrane. The gamma chain is believed to be important in regulating ATPase activity and the flow of protons through the CF(0) complex. This chain is ATP synthase gamma chain, found in Shewanella woodyi (strain ATCC 51908 / MS32).